Reading from the N-terminus, the 100-residue chain is UPF0213 protein YhbQ (100 aa).

The region spanning 2–77 (TPWYLYLIRT…KQLTKRQKER (76 aa)) is the GIY-YIG domain.

This sequence belongs to the UPF0213 family.

The protein is UPF0213 protein YhbQ of Salmonella choleraesuis (strain SC-B67).